The chain runs to 777 residues: Penicillin-binding protein 1B (777 aa).

At 1–30 (MTRKSSNRSRGRKARSGKSASSSKLQIWLG) the chain is on the cytoplasmic side. The helical; Signal-anchor for type II membrane protein transmembrane segment at 31-52 (RIWSIGWKLALTLAAVLVFIGI) threads the bilayer. Topologically, residues 53–777 (YLDSMIKQRF…TEWIKKLFEW (725 aa)) are periplasmic. Residues 162-334 (LRLEPKLMGM…SYYNPMRYAE (173 aa)) are transglycosylase. E200 serves as the catalytic Proton donor; for transglycosylase activity. The transpeptidase stretch occupies residues 415 to 709 (SKLEQAIHDQ…ASGALRVYAQ (295 aa)). The active-site Acyl-ester intermediate; for transpeptidase activity is the S476.

It in the N-terminal section; belongs to the glycosyltransferase 51 family. This sequence in the C-terminal section; belongs to the transpeptidase family.

It localises to the cell inner membrane. It catalyses the reaction [GlcNAc-(1-&gt;4)-Mur2Ac(oyl-L-Ala-gamma-D-Glu-L-Lys-D-Ala-D-Ala)](n)-di-trans,octa-cis-undecaprenyl diphosphate + beta-D-GlcNAc-(1-&gt;4)-Mur2Ac(oyl-L-Ala-gamma-D-Glu-L-Lys-D-Ala-D-Ala)-di-trans,octa-cis-undecaprenyl diphosphate = [GlcNAc-(1-&gt;4)-Mur2Ac(oyl-L-Ala-gamma-D-Glu-L-Lys-D-Ala-D-Ala)](n+1)-di-trans,octa-cis-undecaprenyl diphosphate + di-trans,octa-cis-undecaprenyl diphosphate + H(+). The enzyme catalyses Preferential cleavage: (Ac)2-L-Lys-D-Ala-|-D-Ala. Also transpeptidation of peptidyl-alanyl moieties that are N-acyl substituents of D-alanine.. Its pathway is cell wall biogenesis; peptidoglycan biosynthesis. Cell wall formation. Synthesis of cross-linked peptidoglycan from the lipid intermediates. The enzyme has a penicillin-insensitive transglycosylase N-terminal domain (formation of linear glycan strands) and a penicillin-sensitive transpeptidase C-terminal domain (cross-linking of the peptide subunits). In Vibrio cholerae serotype O1 (strain ATCC 39315 / El Tor Inaba N16961), this protein is Penicillin-binding protein 1B (mrcB).